The sequence spans 356 residues: MSNSTSTPNTGLSYKDAGVDIEAGDALVDRIKSVAKRTTRPEVMGGLGGFGALCKIPKGYEEPVLVSGTDGVGTKLRLALNLNRHDTIGQDLVAMCVNDLLVCGAEPLFFLDYYATGHLNVDVAANVVTGIGKGCELAGCALVGGETAEMPGMYEGEDYDLAGFAVGVVEQSKIIDGSKVKAGDVLIGVASSGAHSNGYSLLRKILDVKNVDLTQEIDGRSLADAAMEPTRIYVKPVLELCKQVDVHAMAHITGGGLPGNLPRVLPNGAQAVIDEASWEWPELFKLLQREGGVEQFEMYRTFNCGVGMVIAVDAADADKTIQVLNAQGEKSWKIGHIQDNAESIEGADEKIRVIFA.

It belongs to the AIR synthase family.

It is found in the cytoplasm. The enzyme catalyses 2-formamido-N(1)-(5-O-phospho-beta-D-ribosyl)acetamidine + ATP = 5-amino-1-(5-phospho-beta-D-ribosyl)imidazole + ADP + phosphate + H(+). The protein operates within purine metabolism; IMP biosynthesis via de novo pathway; 5-amino-1-(5-phospho-D-ribosyl)imidazole from N(2)-formyl-N(1)-(5-phospho-D-ribosyl)glycinamide: step 2/2. The sequence is that of Phosphoribosylformylglycinamidine cyclo-ligase from Acinetobacter baylyi (strain ATCC 33305 / BD413 / ADP1).